A 131-amino-acid chain; its full sequence is UPF0102 protein RALTA_A3032 (131 aa).

The span at 1 to 12 shows a compositional bias: polar residues; sequence MMRSFKSTQEPS. The disordered stretch occupies residues 1 to 21; that stretch reads MMRSFKSTQEPSRQARGAQAE.

It belongs to the UPF0102 family.

In Cupriavidus taiwanensis (strain DSM 17343 / BCRC 17206 / CCUG 44338 / CIP 107171 / LMG 19424 / R1) (Ralstonia taiwanensis (strain LMG 19424)), this protein is UPF0102 protein RALTA_A3032.